We begin with the raw amino-acid sequence, 808 residues long: Probable potassium transporter 3 (808 aa).

At 1–34 (MPVADCESGLSPADVTGAGAANGNPGHWRSYYRH) the chain is on the cytoplasmic side. Residues 35–55 (VLLLAYQSCGVVYGDLSTSPL) form a helical membrane-spanning segment. Residues 56–81 (YVYKSTFIIGSLRRFQDEEIVFGVFS) lie on the Extracellular side of the membrane. Residues 82-102 (LVFWTLTLIPLLKYVFIVLAA) form a helical membrane-spanning segment. Residues 103–167 (DDNGEGGTFA…FLENHRKSRT (65 aa)) are Cytoplasmic-facing. A helical transmembrane segment spans residues 168 to 188 (FLLVTVLFGASLVIGDGVLTP). The Extracellular portion of the chain corresponds to 189-204 (PMSVLSSFSGLQVHST). A helical transmembrane segment spans residues 205-225 (ALTSGEVEILSCTVLVCLFMV). Residues 226 to 232 (QHWGTHR) lie on the Cytoplasmic side of the membrane. The chain crosses the membrane as a helical span at residues 233 to 253 (VAFLFAPVVIVWLLLLGALGV). At 254-283 (YNIVVWNPRVLRALSPYYLVRFFQHTGKDG) the chain is on the extracellular side. The chain crosses the membrane as a helical span at residues 284–304 (WISLGGILLSMTGTEAMYADL). Topologically, residues 305–313 (GHFTAASIR) are cytoplasmic. The helical transmembrane segment at 314 to 334 (VAFVGLIYPCLVLQYMGQAAF) threads the bilayer. At 335-354 (LSKSPHCDIHFVFFESIPTG) the chain is on the extracellular side. The chain crosses the membrane as a helical span at residues 355–375 (IFWPVLVIATLAAIVGSQAVI). Residues 376–406 (SATFSIVRQCTALGCFPRVKIVHTSRRIHGQ) are Cytoplasmic-facing. A helical transmembrane segment spans residues 407-427 (IYSPEINWILMLLCIAVTMGL). The Extracellular segment spans residues 428–439 (RDTTLIGNAYGM). Residues 440–460 (ACAGVMLVTTLLMALVIVFVW) form a helical membrane-spanning segment. Topologically, residues 461 to 464 (QYSC) are cytoplasmic. The helical transmembrane segment at 465–485 (LVAALFLVAFGVVEAVYLSAA) threads the bilayer. The Extracellular portion of the chain corresponds to 486–491 (LMKVPQ). A helical transmembrane segment spans residues 492-512 (GGWLPLVLSLVFVAVMYVWHY). The Cytoplasmic portion of the chain corresponds to 513–808 (GTRRKHQFDV…LIEVGMIYYV (296 aa)).

It belongs to the HAK/KUP transporter (TC 2.A.72.3) family.

The protein localises to the membrane. Functionally, high-affinity potassium transporter. The protein is Probable potassium transporter 3 (HAK3) of Oryza sativa subsp. japonica (Rice).